Here is a 522-residue protein sequence, read N- to C-terminus: Lysine--tRNA ligase (522 aa).

Residues 44-52 carry the 'HIGH' region motif; the sequence is PSGLPHIGT. The 'KMSKS' region signature appears at 290-294; that stretch reads KISKS. Lys293 provides a ligand contact to ATP.

The protein belongs to the class-I aminoacyl-tRNA synthetase family.

It localises to the cytoplasm. It carries out the reaction tRNA(Lys) + L-lysine + ATP = L-lysyl-tRNA(Lys) + AMP + diphosphate. In Rickettsia conorii (strain ATCC VR-613 / Malish 7), this protein is Lysine--tRNA ligase.